The following is a 428-amino-acid chain: Nucleotidyltransferase MB21D2 (428 aa).

A disordered region spans residues 366-389; the sequence is QRRGSTTSIPSPQSDGGDPNQPDD. Over residues 368–379 the composition is skewed to polar residues; sequence RGSTTSIPSPQS. Thr372 carries the phosphothreonine modification. Residues Ser373, Ser376, and Ser379 each carry the phosphoserine modification.

It belongs to the mab-21 family.

Its function is as follows. Probable nucleotidyltransferase that catalyzes the formation of cyclic dinucleotide second messenger in response to some unknown stimulus. The sequence is that of Nucleotidyltransferase MB21D2 from Mus musculus (Mouse).